A 438-amino-acid polypeptide reads, in one-letter code: Exoglucanase 3 (438 aa).

Positions 1-20 are cleaved as a signal peptide; it reads MFKFAALLALASLVPGFVQA. The CBM1 domain maps to 21–59; that stretch reads QSPVWGQCGGNGWTGPTTCASGSTCVKQNDFYSQCLPNN. 2 cysteine pairs are disulfide-bonded: cysteine 28–cysteine 45 and cysteine 39–cysteine 55. The segment at 57–90 is disordered; the sequence is PNNQAPPSTTTQPGTTPPATTTSGGTGPTSGAGN. The tract at residues 60 to 87 is linker; it reads QAPPSTTTQPGTTPPATTTSGGTGPTSG. Positions 61-79 are enriched in low complexity; it reads APPSTTTQPGTTPPATTTS. Residues 88-438 form a catalytic region; that stretch reads AGNPYTGKTV…TLVANANPAL (351 aa). Disulfide bonds link cysteine 170/cysteine 229 and cysteine 360/cysteine 407. Residue aspartate 215 is the Proton donor of the active site. Aspartate 393 acts as the Nucleophile in catalysis.

Belongs to the glycosyl hydrolase 6 (cellulase B) family.

The enzyme catalyses Hydrolysis of (1-&gt;4)-beta-D-glucosidic linkages in cellulose and cellotetraose, releasing cellobiose from the non-reducing ends of the chains.. In terms of biological role, shows enzymatic activity towards crystalline cellulose. At long reaction times. It is also able to degrade carboxymethyl cellulose and barley B-glucan. The polypeptide is Exoglucanase 3 (cel3) (Agaricus bisporus (White button mushroom)).